The primary structure comprises 160 residues: Transcription elongation factor GreA (160 aa).

Residues 43–76 (LSENAEYDAAREQQRQLENKIGDLESKLTRATIL) are a coiled coil.

This sequence belongs to the GreA/GreB family.

Necessary for efficient RNA polymerase transcription elongation past template-encoded arresting sites. The arresting sites in DNA have the property of trapping a certain fraction of elongating RNA polymerases that pass through, resulting in locked ternary complexes. Cleavage of the nascent transcript by cleavage factors such as GreA or GreB allows the resumption of elongation from the new 3'terminus. GreA releases sequences of 2 to 3 nucleotides. This Chlorobium phaeobacteroides (strain BS1) protein is Transcription elongation factor GreA.